The following is a 211-amino-acid chain: Ribosomal RNA small subunit methyltransferase G (211 aa).

Residues glycine 79, leucine 84, 130–131 (VE), and arginine 145 contribute to the S-adenosyl-L-methionine site.

The protein belongs to the methyltransferase superfamily. RNA methyltransferase RsmG family.

It localises to the cytoplasm. It carries out the reaction guanosine(527) in 16S rRNA + S-adenosyl-L-methionine = N(7)-methylguanosine(527) in 16S rRNA + S-adenosyl-L-homocysteine. In terms of biological role, specifically methylates the N7 position of guanine in position 527 of 16S rRNA. This is Ribosomal RNA small subunit methyltransferase G from Alteromonas mediterranea (strain DSM 17117 / CIP 110805 / LMG 28347 / Deep ecotype).